The following is a 732-amino-acid chain: Ets DNA-binding protein pokkuri (732 aa).

The 85-residue stretch at 33 to 117 folds into the PNT domain; sequence SSQLAELKTQ…NVLQMLIIES (85 aa). Residues 133-295 are disordered; that stretch reads SRYPLSPHSH…PPGTPILKDI (163 aa). The span at 141–157 shows a compositional bias: pro residues; the sequence is SHPPTPTWPPLNAPPEN. Polar residues predominate over residues 176-193; it reads NSVTLSPPPSVDSQASSP. A compositionally biased stretch (low complexity) spans 205-240; sequence GAAPGSAGGSAPAAGGATNTSNPTSSSASSTGSNGS. A DNA-binding region (ETS) is located at residues 396-479; sequence RLLWDFLQQL…QGERHCYQFL (84 aa). Disordered stretches follow at residues 496 to 548, 590 to 647, and 674 to 732; these read QSTP…NGPM, GPPP…TATS, and VAAS…HMQQ. A compositionally biased stretch (low complexity) spans 506–539; it reads SPSMPQGSSQAPGSPAGQNWNPQQQSQQQQQSPQ. Ser543 bears the Phosphoserine mark. Positions 637-647 are enriched in polar residues; that stretch reads LSVSSKSTATS. Ser677, Ser682, and Ser696 each carry phosphoserine. The span at 690–709 shows a compositional bias: polar residues; sequence AGASNASSSPRPMDQASEQA.

The protein belongs to the ETS family. Phosphorylated in response to MAPK signaling. May be phosphorylated by rl. As to expression, expressed in R7 and cone cells of the eye.

The protein resides in the nucleus. Ets-related protein that functions as a negative regulator of photoreceptor development acting antagonistically to pnt and the proneural signal mediated by RAS. It acts upstream of SINA to inhibit R7 development. In Drosophila melanogaster (Fruit fly), this protein is Ets DNA-binding protein pokkuri (aop).